The chain runs to 370 residues: Acyl-CoA:lysophosphatidylglycerol acyltransferase 1 (370 aa).

A helical transmembrane segment spans residues 22–42 (FAFMVANNLVAIPSYICYVII). Positions 101–106 (HQATGD) match the HXXXXD motif motif. The chain crosses the membrane as a helical span at residues 342 to 362 (MWIFLIQSFAFLSGYLWYHII).

It belongs to the 1-acyl-sn-glycerol-3-phosphate acyltransferase family. In terms of tissue distribution, ubiquitous. Expressed in heart, kidney, liver, skin, intestine, and thymus. Highest expression is detected in brain and testis.

It localises to the endoplasmic reticulum membrane. It catalyses the reaction a 2-acyl-sn-glycero-3-phosphoethanolamine + octadecanoyl-CoA = 1-octadecanoyl-2-acyl-sn-glycero-3-phosphoethanolamine + CoA. It carries out the reaction 2-(9Z-octadecenoyl)-sn-glycero-3-phosphoethanolamine + octadecanoyl-CoA = 1-octadecanoyl-2-(9Z-octadecenoyl)-sn-glycero-3-phosphoethanolamine + CoA. The catalysed reaction is a 2-acyl-sn-glycero-3-phosphoethanolamine + hexadecanoyl-CoA = 1-hexadecanoyl-2-acyl-sn-glycero-3-phosphoethanolamine + CoA. The enzyme catalyses 2-(9Z-octadecenoyl)-sn-glycero-3-phosphoethanolamine + hexadecanoyl-CoA = 1-hexadecanoyl-2-(9Z-octadecenoyl)-sn-glycero-3-phosphoethanolamine + CoA. It catalyses the reaction 1-tetradecanoyl-sn-glycero-3-phospho-(1'-sn-glycerol) + hexadecanoyl-CoA = 1-tetradecanoyl-2-hexadecanoyl-sn-glycero-3-phospho-(1'-sn-glycerol) + CoA. It carries out the reaction 1-hexadecanoyl-sn-glycero-3-phospho-(1'-sn-glycerol) + dodecanoyl-CoA = 1-hexadecanoyl-2-dodecanoyl-sn-glycero-3-phospho-(1'-sn-glycerol) + CoA. The catalysed reaction is 1-hexadecanoyl-sn-glycero-3-phospho-(1'-sn-glycerol) + hexadecanoyl-CoA = 1,2-dihexadecanoyl-sn-glycero-3-phospho-(1'-sn-glycerol) + CoA. The enzyme catalyses 1-hexadecanoyl-sn-glycero-3-phospho-(1'-sn-glycerol) + octadecanoyl-CoA = 1-hexadecanoyl-2-octadecanoyl-sn-glycero-3-phospho-(1'-sn-glycerol) + CoA. It catalyses the reaction 1-octadecanoyl-sn-glycero-3-phospho-(1'-sn-glycerol) + hexadecanoyl-CoA = 1-octadecanoyl-2-hexadecanoyl-sn-glycero-3-phospho-(1'-sn-glycerol) + CoA. It carries out the reaction 1-(9Z-octadecenoyl)-sn-glycero-3-phospho-(1'-sn-glycerol) + dodecanoyl-CoA = 1-(9Z-octadecenoyl)-2-dodecanoyl-sn-glycero-3-phospho-(1'-sn-glycerol) + CoA. The catalysed reaction is 1-hexadecanoyl-sn-glycero-3-phospho-(1'-sn-glycerol) + (9Z)-octadecenoyl-CoA = 1-hexadecanoyl-2-(9Z-octadecenoyl)-sn-glycero-3-phospho-(1'-sn-glycerol) + CoA. The enzyme catalyses 1-(9Z-octadecenoyl)-sn-glycero-3-phospho-(1'-sn-glycerol) + hexadecanoyl-CoA = 1-(9Z-octadecenoyl)-2-hexadecanoyl-sn-glycero-3-phospho-(1'-sn-glycerol) + CoA. It catalyses the reaction 1-(9Z-octadecenoyl)-sn-glycero-3-phospho-(1'-sn-glycerol) + (9Z)-octadecenoyl-CoA = 1,2-di-(9Z-octadecenoyl)-sn-glycero-3-phospho-(1'-sn-glycerol) + CoA. It carries out the reaction a 2-acylglycerol + an acyl-CoA = a 1,2-diacylglycerol + CoA. The catalysed reaction is a 2-acylglycerol + hexadecanoyl-CoA = a 1-hexadecanoyl-2-acylglycerol + CoA. The enzyme catalyses a 1-acylglycerol + hexadecanoyl-CoA = an hexadecanoyl-acylglycerol + CoA. It catalyses the reaction a 2-acyl-sn-glycero-3-phosphocholine + an acyl-CoA = a 1,2-diacyl-sn-glycero-3-phosphocholine + CoA. It carries out the reaction 2-(9Z-octadecenoyl)-sn-glycero-3-phosphocholine + octadecanoyl-CoA = 1-octadecanoyl-2-(9Z-octadecenoyl)-sn-glycero-3-phosphocholine + CoA. The catalysed reaction is 2-(9Z,12Z-octadecadienoyl)-sn-glycero-3-phosphocholine + octadecanoyl-CoA = 1-octadecanoyl-2-(9Z,12Z)-octadecadienoyl-sn-glycero-3-phosphocholine + CoA. The enzyme catalyses 2-(5Z,8Z,11Z,14Z)-eicosatetraenoyl-sn-glycero-3-phosphocholine + octadecanoyl-CoA = 1-octadecanoyl-2-(5Z,8Z,11Z,14Z-eicosatetraenoyl)-sn-glycero-3-phosphocholine + CoA. It catalyses the reaction 2-(9Z-octadecenoyl)-sn-glycero-3-phosphocholine + hexadecanoyl-CoA = 1-hexadecanoyl-2-(9Z-octadecenoyl)-sn-glycero-3-phosphocholine + CoA. It carries out the reaction 2-(9Z-octadecenoyl)-sn-glycero-3-phospho-L-serine + hexadecanoyl-CoA = 1-hexadecanoyl-2-(9Z-octadecenoyl)-sn-glycero-3-phospho-L-serine + CoA. The catalysed reaction is 2-(4Z,7Z,10Z,13Z,16Z,19Z-docosahexaenoyl)-sn-glycero-3-phosphocholine + octadecanoyl-CoA = 1-octadecanoyl-2-(4Z,7Z,10Z,13Z,16Z,19Z-docosahexaenoyl)-sn-glycero-3-phosphocholine + CoA. The enzyme catalyses 1-(9Z-octadecenoyl)-sn-glycero-3-phospho-L-serine + octadecanoyl-CoA = 1-(9Z-octadecenoyl)-2-octadecanoyl-sn-glycero-3-phospho-L-serine + CoA. It catalyses the reaction a 2-acyl-sn-glycero-3-phosphoethanolamine + a fatty acyl-CoA = a 1,2-diacyl-sn-glycero-3-phosphoethanolamine + CoA. Functionally, lysophospholipid acyltransferase involved in fatty acyl chain remodeling of glycerophospholipids in the endoplasmic reticulum membrane. Selectively catalyzes the transfer and esterification of saturated long-chain fatty acids from acyl-CoA to the sn-1 position of 1-lyso-2-acyl phosphatidylethanolamines (1-lyso-PE, LPE), with a preference for stearoyl CoA over palmitoyl CoA as acyl donor. Acts in concert with an unknown phospholipase A1 to convert palmitate PE species into stearate ones. Provides substrates to the PE methylation pathway, controlling stearate/palmitate composition of PE and phosphatidylcholine (PC) species with an overall impact on de novo hepatic lipid synthesis, body fat content and life span. Can acylate lysophosphatidylglycerols (LPG) using various saturated fatty acyl-CoAs as acyl donors. Can also acylate monoacylglycerols with a preference for 2-monoacylglycerols over 1-monoacylglycerols. Has no activity toward lysophosphatidic acids (LPA) and lysophosphatidylcholines (LPC). This is Acyl-CoA:lysophosphatidylglycerol acyltransferase 1 from Mus musculus (Mouse).